The primary structure comprises 196 residues: MIDFDGYRPNVGIVICNRKGQVLWAKRCGQNSWQFPQGGINDNESAEQAMYRELHEEVGLQPKDVRLLYVSKHWLRYKLPKRLLRYDSKPMCIGQKQRWFLLQLVGDEKNINMKTTKSPEFDGWRWVSFWYPVRQVVSFKRDVYRKVMKEFASVLFTDNPPIFSASREANSQSNSANKKYSQTKYTKRHFYKSKGQ.

A Nudix hydrolase domain is found at 6 to 149 (GYRPNVGIVI…KRDVYRKVMK (144 aa)). The short motif at 38-59 (GGINDNESAEQAMYRELHEEVG) is the Nudix box element. The disordered stretch occupies residues 166–196 (SREANSQSNSANKKYSQTKYTKRHFYKSKGQ). The span at 167–184 (REANSQSNSANKKYSQTK) shows a compositional bias: polar residues. Over residues 185–196 (YTKRHFYKSKGQ) the composition is skewed to basic residues.

Belongs to the Nudix hydrolase family. RppH subfamily. Requires a divalent metal cation as cofactor.

Accelerates the degradation of transcripts by removing pyrophosphate from the 5'-end of triphosphorylated RNA, leading to a more labile monophosphorylated state that can stimulate subsequent ribonuclease cleavage. In Haemophilus influenzae (strain 86-028NP), this protein is RNA pyrophosphohydrolase.